Consider the following 345-residue polypeptide: Biotin synthase (345 aa).

In terms of domain architecture, Radical SAM core spans 38-256 (RQVQVSTLLS…IAVARIMMPA (219 aa)). Cysteine 53, cysteine 57, and cysteine 60 together coordinate [4Fe-4S] cluster. Residues cysteine 97, cysteine 128, cysteine 188, and arginine 260 each contribute to the [2Fe-2S] cluster site.

It belongs to the radical SAM superfamily. Biotin synthase family. Homodimer. [4Fe-4S] cluster is required as a cofactor. The cofactor is [2Fe-2S] cluster.

It carries out the reaction (4R,5S)-dethiobiotin + (sulfur carrier)-SH + 2 reduced [2Fe-2S]-[ferredoxin] + 2 S-adenosyl-L-methionine = (sulfur carrier)-H + biotin + 2 5'-deoxyadenosine + 2 L-methionine + 2 oxidized [2Fe-2S]-[ferredoxin]. Its pathway is cofactor biosynthesis; biotin biosynthesis; biotin from 7,8-diaminononanoate: step 2/2. Its function is as follows. Catalyzes the conversion of dethiobiotin (DTB) to biotin by the insertion of a sulfur atom into dethiobiotin via a radical-based mechanism. The polypeptide is Biotin synthase (Serratia proteamaculans (strain 568)).